We begin with the raw amino-acid sequence, 216 residues long: uncharacterized protein (216 aa).

Residues Leu8–Leu63 form the HTH cro/C1-type domain. The H-T-H motif DNA-binding region spans Ala19–Thr38.

This is an uncharacterized protein from Coxiella burnetii (strain RSA 493 / Nine Mile phase I).